The primary structure comprises 242 residues: Tyrosine recombinase XerD-like (242 aa).

The region spanning 1–71 (MKEAIDQFIQ…AVNQFLYFLY (71 aa)) is the Core-binding (CB) domain. In terms of domain architecture, Tyr recombinase spans 90 to 242 (ENSSQGSLLD…KSITTLEKYR (153 aa)). Catalysis depends on residues lysine 148 and arginine 209. Tyrosine 241 functions as the O-(3'-phospho-DNA)-tyrosine intermediate in the catalytic mechanism.

Belongs to the 'phage' integrase family. XerD-like subfamily.

It is found in the cytoplasm. Putative tyrosine recombinase. Not involved in the cutting and rejoining of the recombining DNA molecules on dif(SL) site. This is Tyrosine recombinase XerD-like from Streptococcus gordonii (strain Challis / ATCC 35105 / BCRC 15272 / CH1 / DL1 / V288).